The sequence spans 153 residues: NAD(P)H-quinone oxidoreductase subunit N (153 aa).

This sequence belongs to the complex I NdhN subunit family. As to quaternary structure, NDH-1 can be composed of about 15 different subunits; different subcomplexes with different compositions have been identified which probably have different functions.

Its subcellular location is the cellular thylakoid membrane. It catalyses the reaction a plastoquinone + NADH + (n+1) H(+)(in) = a plastoquinol + NAD(+) + n H(+)(out). The enzyme catalyses a plastoquinone + NADPH + (n+1) H(+)(in) = a plastoquinol + NADP(+) + n H(+)(out). NDH-1 shuttles electrons from an unknown electron donor, via FMN and iron-sulfur (Fe-S) centers, to quinones in the respiratory and/or the photosynthetic chain. The immediate electron acceptor for the enzyme in this species is believed to be plastoquinone. Couples the redox reaction to proton translocation, and thus conserves the redox energy in a proton gradient. Cyanobacterial NDH-1 also plays a role in inorganic carbon-concentration. The sequence is that of NAD(P)H-quinone oxidoreductase subunit N from Synechococcus sp. (strain RCC307).